The following is a 296-amino-acid chain: MRGGSVFGRCVVVGGAGAVGRMFSHWLVRSGVAVTWLDVAGAGAADGVRVVAGDVRRPGPEAVAALAAADVVVLAVPEPVAWEAVEVLAGVMRPGAVLADTLSVKSRIAGRLREAAPGLQAVGLNPMFAPSLGLQGRPVAAVVVTDGPGVRALVELVAGWGARVVEMPARRHDELTAAQQAATHAAVLAFGLGLGELSVDVGALRDSAPPPHLAMLALLARIAGGTPEVYFDIQAANPGAPAARQALGRGLVRLGQAVERGDEETFAALFAELRGVLGEHGAELERLCARMFTALH.

The Prephenate/arogenate dehydrogenase domain occupies 9–288; that stretch reads RCVVVGGAGA…EHGAELERLC (280 aa).

It belongs to the prephenate/arogenate dehydrogenase family.

It carries out the reaction 4-amino-4-deoxyprephenate + NAD(+) = 3-(4-aminophenyl)pyruvate + CO2 + NADH + H(+). It functions in the pathway antibiotic biosynthesis. Functionally, involved in pristinamycin I biosynthesis. Probably catalyzes the formation of 3-(4-aminophenyl)pyruvate from 4-amino-4-deoxyprephenate. This chain is 4-amino-4-deoxyprephenate dehydrogenase, found in Streptomyces pristinaespiralis.